A 188-amino-acid polypeptide reads, in one-letter code: Probable nicotinate-nucleotide adenylyltransferase (188 aa).

The protein belongs to the NadD family.

It carries out the reaction nicotinate beta-D-ribonucleotide + ATP + H(+) = deamido-NAD(+) + diphosphate. It functions in the pathway cofactor biosynthesis; NAD(+) biosynthesis; deamido-NAD(+) from nicotinate D-ribonucleotide: step 1/1. Functionally, catalyzes the reversible adenylation of nicotinate mononucleotide (NaMN) to nicotinic acid adenine dinucleotide (NaAD). The chain is Probable nicotinate-nucleotide adenylyltransferase from Acholeplasma laidlawii (strain PG-8A).